The sequence spans 498 residues: ATP synthase subunit beta, chloroplastic (498 aa).

172 to 179 is a binding site for ATP; it reads GGAGVGKT.

Belongs to the ATPase alpha/beta chains family. As to quaternary structure, F-type ATPases have 2 components, CF(1) - the catalytic core - and CF(0) - the membrane proton channel. CF(1) has five subunits: alpha(3), beta(3), gamma(1), delta(1), epsilon(1). CF(0) has four main subunits: a(1), b(1), b'(1) and c(9-12).

It localises to the plastid. The protein localises to the chloroplast thylakoid membrane. It catalyses the reaction ATP + H2O + 4 H(+)(in) = ADP + phosphate + 5 H(+)(out). Its function is as follows. Produces ATP from ADP in the presence of a proton gradient across the membrane. The catalytic sites are hosted primarily by the beta subunits. The chain is ATP synthase subunit beta, chloroplastic from Coffea arabica (Arabian coffee).